The following is a 525-amino-acid chain: Phosphatidylinositol 4-kinase alpha 2 (525 aa).

The segment at 163–278 (SDVRQHIVDG…VKPQACIFKV (116 aa)) is pleckstrin homology (PH) domain conferring phosphoinositide binding specificity. In terms of domain architecture, PI3K/PI4K catalytic spans 239–509 (VDSGIPLQSA…VCTDAYNKWT (271 aa)). Residues 245 to 251 (LQSAAKV) are G-loop. The segment at 373–381 (QPKDRHNGN) is catalytic loop. Positions 392 to 417 (HIDFGFILETSPGGNMRFENAHFKLS) are activation loop.

This sequence belongs to the PI3/PI4-kinase family. Type III PI4K subfamily.

It is found in the membrane. It carries out the reaction a 1,2-diacyl-sn-glycero-3-phospho-(1D-myo-inositol) + ATP = a 1,2-diacyl-sn-glycero-3-phospho-(1D-myo-inositol 4-phosphate) + ADP + H(+). In terms of biological role, acts on phosphatidylinositol (PtdIns) in the first committed step in the production of the second messenger inositol-1,4,5,-trisphosphate. The sequence is that of Phosphatidylinositol 4-kinase alpha 2 (PI4KA2) from Arabidopsis thaliana (Mouse-ear cress).